The following is a 335-amino-acid chain: Mesoderm-specific transcript protein (335 aa).

2 helical membrane passes run 13–33 (WWVQ…HIPP) and 63–83 (VGVV…TSSY). An AB hydrolase-1 domain is found at 71–310 (IVVLLHGFPT…PRSTVSILDD (240 aa)). An RVIALD motif is present at residues 98–103 (RVIALD). A glycan (N-linked (GlcNAc...) asparagine) is linked at asparagine 163. The chain crosses the membrane as a helical span at residues 266-286 (VGALASVSIPIHFIYGPLDPI).

Belongs to the AB hydrolase superfamily. Expressed in mesodermal tissues. Isoform 1 is exclusively expressed from the paternal allele in all fetal tissues and cell lines examined, whereas isoform 2 is preferentially expressed from the paternal allele in a tissue-type-specific manner.

It is found in the endoplasmic reticulum membrane. This chain is Mesoderm-specific transcript protein (Mest), found in Mus musculus (Mouse).